The following is a 380-amino-acid chain: Rab9 effector protein with kelch motifs (380 aa).

6 Kelch repeats span residues 57–103 (KIFI…FLPS), 108–154 (SIWV…TSSA), 159–211 (QLYV…AAGT), 212–258 (KLFI…AAVA), 262–311 (HVYM…VIPW), and 357–380 (LCFV…TVVD).

Interacts with PIKFYVE; the interaction recruits RABEPK to the endosomal membrane. Interacts with RAB9 in its GTP-bound conformation. Post-translationally, phosphorylated on Ser residues by PIKFYVE.

It localises to the cytoplasm. The protein localises to the endosome membrane. Functionally, rab9 effector required for endosome to trans-Golgi network (TGN) transport. In Mus musculus (Mouse), this protein is Rab9 effector protein with kelch motifs.